Here is a 129-residue protein sequence, read N- to C-terminus: Ribosome-binding factor A (129 aa).

Belongs to the RbfA family. As to quaternary structure, monomer. Binds 30S ribosomal subunits, but not 50S ribosomal subunits or 70S ribosomes.

The protein resides in the cytoplasm. In terms of biological role, one of several proteins that assist in the late maturation steps of the functional core of the 30S ribosomal subunit. Associates with free 30S ribosomal subunits (but not with 30S subunits that are part of 70S ribosomes or polysomes). Required for efficient processing of 16S rRNA. May interact with the 5'-terminal helix region of 16S rRNA. The chain is Ribosome-binding factor A from Thermomicrobium roseum (strain ATCC 27502 / DSM 5159 / P-2).